The sequence spans 131 residues: Cell cycle protein GpsB (131 aa).

Residues 39-76 (LDGIIRDYEAFTNEIDRLKEENTKLFSRVDELTKQLSV) adopt a coiled-coil conformation. The segment at 111–131 (KLSDSSVDNHDDGNHSDVDQY) is disordered. Positions 117–131 (VDNHDDGNHSDVDQY) are enriched in basic and acidic residues.

This sequence belongs to the GpsB family. In terms of assembly, forms polymers through the coiled coil domains. Interacts with PBP1, MreC and EzrA.

Its subcellular location is the cytoplasm. Divisome component that associates with the complex late in its assembly, after the Z-ring is formed, and is dependent on DivIC and PBP2B for its recruitment to the divisome. Together with EzrA, is a key component of the system that regulates PBP1 localization during cell cycle progression. Its main role could be the removal of PBP1 from the cell pole after pole maturation is completed. Also contributes to the recruitment of PBP1 to the division complex. Not essential for septum formation. The protein is Cell cycle protein GpsB of Lacticaseibacillus casei (strain BL23) (Lactobacillus casei).